A 516-amino-acid polypeptide reads, in one-letter code: MANQLRERHQSLKKKYGELIDGDPSVPPEKRKQVNLAQLLGDSREKCKKMESEIKELQQRLGEVQGDNKLLRMTIAKQRLGDDEVGKRHFAPHEREDLVLQLEKAKEQIEAFEHDLQASLDELQDVKQERSFFQDKAERLNQELNHVLGGHEKRIIDIDALCMENRYLQERLKQVQEEVNLQKSNLVKYKNALEKRRNSKSNTKLSSSALTGVLSAKQVQELLSEEHGCSLPATPQSVSDLKSLATALLETIHEKNMVIQHQRQTNKILGNRVAELEKKLRTLEVSGLWSLPGGRDTITLSNPSSPSRGPKSLIPAFTDVPHHKPLTNEEHGQPGVELGSPALDEGSDNEAAKQLANSQVPLGNTYDNTYLHPFIPLLCQENEDLERQGPEIAKMTQELTAGEIEETSFEIPPDSQSTASSQENHDNLQSPFSSPEPSGAMSKKHPDISLGDENIVPVPQECADEITAGSNVNQCTEAQHDNKDCWEIEDCDSSEKAANNSCELIERCNRLNESVS.

Positions 1–18 (MANQLRERHQSLKKKYGE) are enriched in basic and acidic residues. Residues 1 to 29 (MANQLRERHQSLKKKYGELIDGDPSVPPE) form a disordered region. 2 coiled-coil regions span residues 1–195 (MANQ…ALEK) and 259–286 (IQHQ…LEVS). Residues 321–332 (PHHKPLTNEEHG) show a composition bias toward basic and acidic residues. Disordered regions lie at residues 321–350 (PHHK…SDNE) and 406–452 (ETSF…SLGD). Positions 414-436 (DSQSTASSQENHDNLQSPFSSPE) are enriched in polar residues.

This sequence belongs to the CCDC149 family.

The chain is Coiled-coil domain-containing protein 149 (ccdc149) from Xenopus laevis (African clawed frog).